The primary structure comprises 281 residues: Feruloyl esterase A (281 aa).

Positions 1 to 21 are cleaved as a signal peptide; it reads MKQFSAKYALILLATAGQALA. Disulfide bonds link cysteine 50–cysteine 279, cysteine 112–cysteine 115, and cysteine 248–cysteine 255. Aspartate 98 provides a ligand contact to substrate. The N-linked (GlcNAc...) asparagine glycan is linked to asparagine 100. Tyrosine 101 is a binding site for substrate. The active-site Nucleophile is serine 154. Aspartate 215 acts as the Charge relay system in catalysis. Residue histidine 268 coordinates substrate. Histidine 268 serves as the catalytic Charge relay system.

Glycosylated.

The protein resides in the secreted. The enzyme catalyses feruloyl-polysaccharide + H2O = ferulate + polysaccharide.. Inhibited by the specific serine esterase inhibitor diisopropylfluorophosphate. Functionally, involved in degradation of plant cell walls. Hydrolyzes the feruloyl-arabinose ester bond in arabinoxylans, and the feruloyl-galactose ester bond in pectin. Binds to cellulose. In Aspergillus niger, this protein is Feruloyl esterase A (faeA).